Here is a 250-residue protein sequence, read N- to C-terminus: MMPDHGELLYEGKAKRVFASTDPDRVLVEFKNDATAFNAQKKAQLDGKGRLNCQISARLFDLLEREGVPTHYCGLAGETWMLVRRVRIIPLEVVLRNIATGSLCRQTPIAEGTAIEPALLDLYYKDDSLGDPLLTEARVQLLGVADTAQLSAIEQLARRVNAVLLPFFDELDLQLVDFKLELGLASDGTLLLADEISPDTCRLWDRRNSNAEDRILDKDRFRKDLGGVMEAYGEVLKRVQGNCPNPRNCL.

The protein belongs to the SAICAR synthetase family.

The catalysed reaction is 5-amino-1-(5-phospho-D-ribosyl)imidazole-4-carboxylate + L-aspartate + ATP = (2S)-2-[5-amino-1-(5-phospho-beta-D-ribosyl)imidazole-4-carboxamido]succinate + ADP + phosphate + 2 H(+). The protein operates within purine metabolism; IMP biosynthesis via de novo pathway; 5-amino-1-(5-phospho-D-ribosyl)imidazole-4-carboxamide from 5-amino-1-(5-phospho-D-ribosyl)imidazole-4-carboxylate: step 1/2. In Synechococcus sp. (strain CC9605), this protein is Phosphoribosylaminoimidazole-succinocarboxamide synthase.